Reading from the N-terminus, the 1024-residue chain is Multidrug resistance protein MdtC (1024 aa).

12 consecutive transmembrane segments (helical) span residues 12–32 (VATT…FSLL), 333–353 (EVER…FLFL), 360–380 (LIPA…MYLC), 387–407 (LSLM…IVVL), 431–451 (VGFT…PLLL), 463–483 (FAVT…TLTP), 528–548 (WVMV…ISIP), 853–873 (LWLI…LYES), 875–895 (VHPL…LLAL), 897–917 (LFDA…IGIV), 953–973 (PILM…ISSG), and 984–1004 (ITIV…TPVV).

It belongs to the resistance-nodulation-cell division (RND) (TC 2.A.6) family. MdtC subfamily. In terms of assembly, part of a tripartite efflux system composed of MdtA, MdtB and MdtC. MdtC forms a heteromultimer with MdtB.

Its subcellular location is the cell inner membrane. The sequence is that of Multidrug resistance protein MdtC from Yersinia enterocolitica serotype O:8 / biotype 1B (strain NCTC 13174 / 8081).